We begin with the raw amino-acid sequence, 47 residues long: Large ribosomal subunit protein bL34 (47 aa).

The protein belongs to the bacterial ribosomal protein bL34 family.

This is Large ribosomal subunit protein bL34 from Mycolicibacterium vanbaalenii (strain DSM 7251 / JCM 13017 / BCRC 16820 / KCTC 9966 / NRRL B-24157 / PYR-1) (Mycobacterium vanbaalenii).